A 416-amino-acid polypeptide reads, in one-letter code: CinA-like protein (416 aa).

The protein belongs to the CinA family.

In Solibacter usitatus (strain Ellin6076), this protein is CinA-like protein.